The sequence spans 396 residues: CCA-adding enzyme (396 aa).

Residues G32 and R35 each coordinate ATP. 2 residues coordinate CTP: G32 and R35. Residues D45 and D47 each contribute to the Mg(2+) site. ATP is bound by residues R116, D159, R162, R165, and R168. Residues R116, D159, R162, R165, and R168 each contribute to the CTP site.

The protein belongs to the tRNA nucleotidyltransferase/poly(A) polymerase family. Bacterial CCA-adding enzyme type 3 subfamily. In terms of assembly, homodimer. It depends on Mg(2+) as a cofactor.

It catalyses the reaction a tRNA precursor + 2 CTP + ATP = a tRNA with a 3' CCA end + 3 diphosphate. The catalysed reaction is a tRNA with a 3' CCA end + 2 CTP + ATP = a tRNA with a 3' CCACCA end + 3 diphosphate. Functionally, catalyzes the addition and repair of the essential 3'-terminal CCA sequence in tRNAs without using a nucleic acid template. Adds these three nucleotides in the order of C, C, and A to the tRNA nucleotide-73, using CTP and ATP as substrates and producing inorganic pyrophosphate. tRNA 3'-terminal CCA addition is required both for tRNA processing and repair. Also involved in tRNA surveillance by mediating tandem CCA addition to generate a CCACCA at the 3' terminus of unstable tRNAs. While stable tRNAs receive only 3'-terminal CCA, unstable tRNAs are marked with CCACCA and rapidly degraded. In Lactobacillus delbrueckii subsp. bulgaricus (strain ATCC 11842 / DSM 20081 / BCRC 10696 / JCM 1002 / NBRC 13953 / NCIMB 11778 / NCTC 12712 / WDCM 00102 / Lb 14), this protein is CCA-adding enzyme.